Here is a 160-residue protein sequence, read N- to C-terminus: MQPASAKWYDRRDYVFIEFCVEDSKDVNVNFEKSKLTFSCLGGSDNFKHLNEIDLFHCIDPNDSKHKRTDRSILCCLRKGESGQSWPRLTKERAKLNWLSVDFNNWKDWEDDSDEDMSNFDRFSEMMNNMGGDEDVDLPEVDGADDDSQDSDDEKMPDLE.

The region spanning 1–90 (MQPASAKWYD…ESGQSWPRLT (90 aa)) is the CS domain. Lys33 carries the post-translational modification N6-acetyllysine. Lys35 is covalently cross-linked (Glycyl lysine isopeptide (Lys-Gly) (interchain with G-Cter in SUMO2)). At Ser44 the chain carries Phosphoserine. Lys65 is covalently cross-linked (Glycyl lysine isopeptide (Lys-Gly) (interchain with G-Cter in SUMO2)). A phosphoserine mark is found at Ser85, Ser100, Ser113, Ser118, Ser148, and Ser151. The segment at 124 to 160 (SEMMNNMGGDEDVDLPEVDGADDDSQDSDDEKMPDLE) is disordered. Residues 132-153 (GDEDVDLPEVDGADDDSQDSDD) show a composition bias toward acidic residues. The PXLE motif signature appears at 157–160 (PDLE).

This sequence belongs to the p23/wos2 family. In terms of assembly, probably forms a complex composed of chaperones HSP90 and HSP70, co-chaperones STIP1/HOP, CDC37, PPP5C, PTGES3/p23, TSC1 and client protein TSC2. Binds to the progesterone receptor. Interacts with TERT; the interaction, together with HSP90AA1, is required for correct assembly and stabilization of the telomerase holoenzyme complex. Interacts (via PXLE motif) with EGLN1/PHD2, recruiting EGLN1/PHD2 to the HSP90 pathway to facilitate HIF alpha proteins hydroxylation. Interacts with HSP90AA1, FLCN, FNIP1 and FNIP2. In terms of processing, proteolytically cleaved by caspase-7 (CASP7) in response to apoptosis, leading to its inactivation. Detected in testis and ovary, at lower levels in endometrium, myometrium, kidney and lung, and only faintly in spleen, heart and muscle (at protein level). Expressed at high levels in glandular and luminal epithelial cells of the endometrium, but also detected in stromal cells (at protein level).

The protein resides in the cytoplasm. The enzyme catalyses prostaglandin H2 = prostaglandin E2. The protein operates within lipid metabolism; prostaglandin biosynthesis. Functionally, cytosolic prostaglandin synthase that catalyzes the oxidoreduction of prostaglandin endoperoxide H2 (PGH2) to prostaglandin E2 (PGE2). Molecular chaperone that localizes to genomic response elements in a hormone-dependent manner and disrupts receptor-mediated transcriptional activation, by promoting disassembly of transcriptional regulatory complexes. Facilitates HIF alpha proteins hydroxylation via interaction with EGLN1/PHD2, leading to recruit EGLN1/PHD2 to the HSP90 pathway. The polypeptide is Prostaglandin E synthase 3 (PTGES3) (Bos taurus (Bovine)).